The primary structure comprises 178 residues: 2-C-methyl-D-erythritol 2,4-cyclodiphosphate synthase (178 aa).

Residues Asp24, His26, and His61 each coordinate a divalent metal cation. Residue 24 to 26 participates in 4-CDP-2-C-methyl-D-erythritol 2-phosphate binding; the sequence is DSH. Residue 150–153 coordinates 4-CDP-2-C-methyl-D-erythritol 2-phosphate; it reads TSGE.

This sequence belongs to the IspF family. Homotrimer. The cofactor is a divalent metal cation.

The catalysed reaction is 4-CDP-2-C-methyl-D-erythritol 2-phosphate = 2-C-methyl-D-erythritol 2,4-cyclic diphosphate + CMP. The protein operates within isoprenoid biosynthesis; isopentenyl diphosphate biosynthesis via DXP pathway; isopentenyl diphosphate from 1-deoxy-D-xylulose 5-phosphate: step 4/6. Functionally, involved in the biosynthesis of isopentenyl diphosphate (IPP) and dimethylallyl diphosphate (DMAPP), two major building blocks of isoprenoid compounds. Catalyzes the conversion of 4-diphosphocytidyl-2-C-methyl-D-erythritol 2-phosphate (CDP-ME2P) to 2-C-methyl-D-erythritol 2,4-cyclodiphosphate (ME-CPP) with a corresponding release of cytidine 5-monophosphate (CMP). The chain is 2-C-methyl-D-erythritol 2,4-cyclodiphosphate synthase from Chlamydia trachomatis serovar L2 (strain ATCC VR-902B / DSM 19102 / 434/Bu).